The chain runs to 216 residues: Guanylate kinase (216 aa).

The 179-residue stretch at 15 to 193 (GNLFMVVAPS…ALKQLQNVVH (179 aa)) folds into the Guanylate kinase-like domain. Residue 22 to 29 (APSGAGKS) coordinates ATP.

This sequence belongs to the guanylate kinase family.

Its subcellular location is the cytoplasm. It catalyses the reaction GMP + ATP = GDP + ADP. Functionally, essential for recycling GMP and indirectly, cGMP. This chain is Guanylate kinase, found in Cupriavidus metallidurans (strain ATCC 43123 / DSM 2839 / NBRC 102507 / CH34) (Ralstonia metallidurans).